The following is a 565-amino-acid chain: Dihydroxy-acid dehydratase (565 aa).

A Mg(2+)-binding site is contributed by aspartate 80. Cysteine 121 provides a ligand contact to [2Fe-2S] cluster. Residues aspartate 122 and lysine 123 each coordinate Mg(2+). At lysine 123 the chain carries N6-carboxylysine. Cysteine 194 is a binding site for [2Fe-2S] cluster. Position 447 (glutamate 447) interacts with Mg(2+). The active-site Proton acceptor is the serine 473.

It belongs to the IlvD/Edd family. In terms of assembly, homodimer. [2Fe-2S] cluster serves as cofactor. Requires Mg(2+) as cofactor.

It carries out the reaction (2R)-2,3-dihydroxy-3-methylbutanoate = 3-methyl-2-oxobutanoate + H2O. The catalysed reaction is (2R,3R)-2,3-dihydroxy-3-methylpentanoate = (S)-3-methyl-2-oxopentanoate + H2O. It participates in amino-acid biosynthesis; L-isoleucine biosynthesis; L-isoleucine from 2-oxobutanoate: step 3/4. Its pathway is amino-acid biosynthesis; L-valine biosynthesis; L-valine from pyruvate: step 3/4. Functions in the biosynthesis of branched-chain amino acids. Catalyzes the dehydration of (2R,3R)-2,3-dihydroxy-3-methylpentanoate (2,3-dihydroxy-3-methylvalerate) into 2-oxo-3-methylpentanoate (2-oxo-3-methylvalerate) and of (2R)-2,3-dihydroxy-3-methylbutanoate (2,3-dihydroxyisovalerate) into 2-oxo-3-methylbutanoate (2-oxoisovalerate), the penultimate precursor to L-isoleucine and L-valine, respectively. The chain is Dihydroxy-acid dehydratase from Chlorobium phaeovibrioides (strain DSM 265 / 1930) (Prosthecochloris vibrioformis (strain DSM 265)).